The primary structure comprises 292 residues: MSVLYPSLEDLKVGQVIQAQGRASPTMPTLPAPMASAPPLSELYPNLAELESYMGLSLSSQEVQKNLTQIPDSDNMVVTSPGPGQVVAPVSGNNLGILRAEIKPGVREIHLCKDERGKTGLRLQAVDKGLFVQLVQANTPASLVGLRFGDQILQIDGCDCAGWNTHKAHKVLKKASAEKIVMVIRDRPFQRTVTMHKDSSGQVGFSIKKGKIVSVVKGSSAARNGLLTNHYVCEVNGQNVIGLKDKKVTEILTTAGDVITLTIIPTVIYEHMIKRLSPLLLHHTMDHSIPDT.

PDZ domains follow at residues 108–187 and 192–267; these read EIHL…IRDR and TVTM…IPTV.

Monomer and homodimer. Interacts with SDCBP. Interacts with TM4SF1.

The protein localises to the cytoplasm. It is found in the nucleus. It localises to the nucleolus. Its subcellular location is the nucleoplasm. The protein resides in the cell membrane. The protein localises to the nucleus speckle. Its function is as follows. Binds phosphatidylinositol 4,5-bisphosphate (PIP2). May play a role in the organization of nuclear PIP2, cell division and cell survival. This Mus musculus (Mouse) protein is Syntenin-2 (Sdcbp2).